Reading from the N-terminus, the 298-residue chain is uncharacterized protein (298 aa).

The protein localises to the cytoplasm. It localises to the nucleus. This is an uncharacterized protein from Schizosaccharomyces pombe (strain 972 / ATCC 24843) (Fission yeast).